A 167-amino-acid polypeptide reads, in one-letter code: Phospholipase A2 (167 aa).

Ca(2+) contacts are provided by tryptophan 38, glycine 40, and glycine 42. Cystine bridges form between cysteine 39/cysteine 61, cysteine 60/cysteine 99, cysteine 67/cysteine 92, cysteine 90/cysteine 127, and cysteine 132/cysteine 144. A glycan (N-linked (GlcNAc...) asparagine) is linked at asparagine 47. The active site involves histidine 64. Aspartate 65 lines the Ca(2+) pocket. Positions 136–140 (ARSAR) are excised as a propeptide.

It belongs to the phospholipase A2 family. Group III subfamily. In terms of assembly, heterodimer composed of a large subunit and a small subunit; disulfide-linked. Ca(2+) serves as cofactor. As to expression, expressed by the venom gland.

Its subcellular location is the secreted. The catalysed reaction is a 1,2-diacyl-sn-glycero-3-phosphocholine + H2O = a 1-acyl-sn-glycero-3-phosphocholine + a fatty acid + H(+). Its function is as follows. Phospholipase toxin, which catalyzes the calcium-dependent hydrolysis of the 2-acyl groups in 3-sn-phosphoglycerides. Inhibits both skeletal (RYR1) and cardiac (RYR2) ryanodine receptors (calcium release channels). Probably blocks ryanodine receptors by generating a lipid product. Shows hemolytic activity, but it is not know if it is direct or indirect. This Hottentotta tamulus (Eastern Indian scorpion) protein is Phospholipase A2.